The following is a 295-amino-acid chain: Probable aspartoacylase (295 aa).

Positions 16 and 19 each coordinate Zn(2+). Substrate contacts are provided by residues Arg-58 and 65-66 (NR). Position 107 (His-107) interacts with Zn(2+). Residues Glu-166 and Tyr-277 each contribute to the substrate site.

The protein belongs to the AspA/AstE family. Aspartoacylase subfamily. The cofactor is Zn(2+).

The enzyme catalyses an N-acyl-L-aspartate + H2O = a carboxylate + L-aspartate. This Acaryochloris marina (strain MBIC 11017) protein is Probable aspartoacylase.